Here is a 142-residue protein sequence, read N- to C-terminus: MIGTLKRAWIPLLILVVVAIAGFTVQRIRTFFGSEGILVTPKVFADDPEPFDPKVVEYEVSGSGSYVNINYLDLDAKPQRIDGAALPWSLTLKTTAPSAAPNILAQGDGTSITCRITVDGEVKDERTATGVDALTYCFVKSA.

A helical transmembrane segment spans residues 7-26; it reads RAWIPLLILVVVAIAGFTVQ.

The protein belongs to the MmpS family.

The protein resides in the cell membrane. In Mycobacterium bovis (strain ATCC BAA-935 / AF2122/97), this protein is Probable transport accessory protein MmpS5 (mmpS5).